The following is a 157-amino-acid chain: Protein Smg homolog (157 aa).

Belongs to the Smg family.

The chain is Protein Smg homolog from Aliivibrio fischeri (strain ATCC 700601 / ES114) (Vibrio fischeri).